Consider the following 99-residue polypeptide: Nucleoid-associated protein SPy_1862/M5005_Spy1580 (99 aa).

Belongs to the YbaB/EbfC family. Homodimer.

The protein resides in the cytoplasm. The protein localises to the nucleoid. In terms of biological role, binds to DNA and alters its conformation. May be involved in regulation of gene expression, nucleoid organization and DNA protection. This chain is Nucleoid-associated protein SPy_1862/M5005_Spy1580, found in Streptococcus pyogenes serotype M1.